We begin with the raw amino-acid sequence, 189 residues long: GTPase NRas (189 aa).

Residues 10-18 and 29-30 contribute to the GTP site; these read GAGGVGKSA and VD. The Effector region signature appears at 32–40; sequence YDPTIEDSY. (Microbial infection) O-linked (Glc) threonine; by P.sordellii toxin TcsL glycosylation is present at Thr-35. 57-61 is a binding site for GTP; that stretch reads DTAGQ. The residue at position 89 (Ser-89) is a Phosphoserine. A GTP-binding site is contributed by 116–119; the sequence is NKCD. The tract at residues 166 to 185 is hypervariable region; the sequence is YRMKKLNSSDDGTQGCMGLP. A Glycyl lysine isopeptide (Lys-Gly) (interchain with G-Cter in ubiquitin) cross-link involves residue Lys-170. Cys-181 carries S-palmitoyl cysteine lipidation. Cys-186 is lipidated: S-farnesyl cysteine. Positions 187–189 are cleaved as a propeptide — removed in mature form; the sequence is VVM.

This sequence belongs to the small GTPase superfamily. Ras family. In terms of assembly, interacts (active GTP-bound form preferentially) with RGS14. Interacts (active GTP-bound form) with RASSF7. Interacts (active GTP-bound form) with both SHOC2 and PP1c (all isoforms) to form a tertiary complex; SHOC2 and PP1c preferably bind M-Ras/MRAS, but they also bind K-Ras/KRAS, N-Ras/NRAS and H-Ras/HRAS. Post-translationally, palmitoylated by the ZDHHC9-GOLGA7 complex. Depalmitoylated by ABHD17A, ABHD17B and ABHD17C. A continuous cycle of de- and re-palmitoylation regulates rapid exchange between plasma membrane and Golgi. In terms of processing, acetylation at Lys-104 prevents interaction with guanine nucleotide exchange factors (GEFs). Fatty-acylated at Lys-169 and/or Lys-170. Post-translationally, ubiquitinated by the BCR(LZTR1) E3 ubiquitin ligase complex at Lys-170 in a non-degradative manner, leading to inhibit Ras signaling by decreasing Ras association with membranes. In terms of processing, phosphorylation at Ser-89 enhances NRAS association with its downstream effectors. (Microbial infection) Glucosylated at Thr-35 by P.sordellii toxin TcsL.

Its subcellular location is the cell membrane. The protein resides in the golgi apparatus membrane. It catalyses the reaction GTP + H2O = GDP + phosphate + H(+). With respect to regulation, alternates between an inactive form bound to GDP and an active form bound to GTP. Activated by a guanine nucleotide-exchange factor (GEF) and inactivated by a GTPase-activating protein (GAP). Ras proteins bind GDP/GTP and possess intrinsic GTPase activity. This Homo sapiens (Human) protein is GTPase NRas (NRAS).